Consider the following 676-residue polypeptide: DNA ligase (676 aa).

NAD(+)-binding positions include 35-39 (DYEFD), 84-85 (SL), and glutamate 118. Catalysis depends on lysine 120, which acts as the N6-AMP-lysine intermediate. Residues arginine 141, glutamate 184, lysine 299, and lysine 323 each coordinate NAD(+). Zn(2+) is bound by residues cysteine 417, cysteine 420, cysteine 435, and cysteine 441. The region spanning 600–676 (LINRNFEGVN…ISEDEFNAML (77 aa)) is the BRCT domain.

It belongs to the NAD-dependent DNA ligase family. LigA subfamily. It depends on Mg(2+) as a cofactor. The cofactor is Mn(2+).

It catalyses the reaction NAD(+) + (deoxyribonucleotide)n-3'-hydroxyl + 5'-phospho-(deoxyribonucleotide)m = (deoxyribonucleotide)n+m + AMP + beta-nicotinamide D-nucleotide.. In terms of biological role, DNA ligase that catalyzes the formation of phosphodiester linkages between 5'-phosphoryl and 3'-hydroxyl groups in double-stranded DNA using NAD as a coenzyme and as the energy source for the reaction. It is essential for DNA replication and repair of damaged DNA. This is DNA ligase from Chlorobium phaeobacteroides (strain DSM 266 / SMG 266 / 2430).